The primary structure comprises 562 residues: Cytochrome c oxidase subunit 1 (562 aa).

Residues 21-41 (TLYFLVLGFLALIVGSLFGPF) form a helical membrane-spanning segment. A Fe(II)-heme a-binding site is contributed by histidine 72. The next 8 membrane-spanning stretches (helical) occupy residues 74-94 (VLNA…YLPA), 105-125 (LMWL…LPLL), 144-164 (AFYL…YIVL), 187-207 (VVFW…AVLF), 227-247 (LFWW…YAII), 267-287 (LAFL…QFAD), 300-320 (VLTL…AASL), and 345-365 (AFVA…GGIV). Positions 233, 237, 282, and 283 each coordinate Cu cation. Residues 233–237 (HPIVY) constitute a cross-link (1'-histidyl-3'-tyrosine (His-Tyr)). Histidine 384 contacts heme a3. 4 consecutive transmembrane segments (helical) span residues 385–405 (FHLQ…YWLL), 420–440 (LGLA…VGLH), 471–491 (VLAG…LFSV), and 527–547 (IGFW…PTLV). Histidine 386 is a binding site for Fe(II)-heme a.

Belongs to the heme-copper respiratory oxidase family. It depends on heme as a cofactor. The cofactor is Cu cation.

Its subcellular location is the cell membrane. It catalyses the reaction 4 Fe(II)-[cytochrome c] + O2 + 8 H(+)(in) = 4 Fe(III)-[cytochrome c] + 2 H2O + 4 H(+)(out). Its pathway is energy metabolism; oxidative phosphorylation. The polypeptide is Cytochrome c oxidase subunit 1 (cbaA) (Thermus thermophilus (strain ATCC 27634 / DSM 579 / HB8)).